The chain runs to 203 residues: Glycerol-3-phosphate acyltransferase (203 aa).

The next 4 helical transmembrane spans lie at 7 to 27 (TLLMILAAYLAGSISSAVLVC), 82 to 102 (AVSLGLIAIAACLGHIYPVFF), 118 to 138 (APIGDDLAICLMASWVVLLLI), and 141 to 161 (YSSLAAILTALLAPLYTWWLD).

This sequence belongs to the PlsY family. Probably interacts with PlsX.

It is found in the cell inner membrane. The catalysed reaction is an acyl phosphate + sn-glycerol 3-phosphate = a 1-acyl-sn-glycero-3-phosphate + phosphate. The protein operates within lipid metabolism; phospholipid metabolism. Its function is as follows. Catalyzes the transfer of an acyl group from acyl-phosphate (acyl-PO(4)) to glycerol-3-phosphate (G3P) to form lysophosphatidic acid (LPA). This enzyme utilizes acyl-phosphate as fatty acyl donor, but not acyl-CoA or acyl-ACP. In Shewanella baltica (strain OS223), this protein is Glycerol-3-phosphate acyltransferase.